The following is a 677-amino-acid chain: Fermitin family homolog 1 (677 aa).

The 558-residue stretch at 96–653 (MLRLRLPNAK…HEYIGGYIFL (558 aa)) folds into the FERM domain. The tract at residues 157 to 181 (KEPVIEDILNLESSSTSSGSPVSPG) is disordered. The segment covering 169–181 (SSSTSSGSPVSPG) has biased composition (low complexity). Serine 170 and serine 179 each carry phosphoserine. One can recognise a PH domain in the interval 377–473 (KLFRPKKLML…WMAACILASK (97 aa)).

This sequence belongs to the kindlin family. In terms of assembly, interacts with the cytoplasmic domain of integrins ITGB1 and ITGB3.

Its subcellular location is the cytoplasm. It localises to the cytoskeleton. The protein localises to the cell junction. The protein resides in the focal adhesion. It is found in the cell projection. Its subcellular location is the ruffle membrane. Involved in cell adhesion. Contributes to integrin activation. When coexpressed with talin, potentiates activation of ITGA2B. Required for normal keratinocyte proliferation. Required for normal polarization of basal keratinocytes in skin, and for normal cell shape. Required for normal adhesion of keratinocytes to fibronectin and laminin, and for normal keratinocyte migration to wound sites. The polypeptide is Fermitin family homolog 1 (Fermt1) (Mus musculus (Mouse)).